We begin with the raw amino-acid sequence, 27 residues long: L-amino-acid oxidase (27 aa).

In terms of assembly, homodimer; non-covalently linked. FAD serves as cofactor. Post-translationally, contains 2 disulfide bonds. N-glycosylated. Expressed by the venom gland.

The protein localises to the secreted. It catalyses the reaction an L-alpha-amino acid + O2 + H2O = a 2-oxocarboxylate + H2O2 + NH4(+). It carries out the reaction L-leucine + O2 + H2O = 4-methyl-2-oxopentanoate + H2O2 + NH4(+). Functionally, catalyzes an oxidative deamination of predominantly hydrophobic and aromatic L-amino acids, thus producing hydrogen peroxide that may contribute to the diverse toxic effects of this enzyme. Shows activity on L-Leu. Exhibits diverse biological activities, such as hemolysis, edema, apoptosis, as well as induction of platelet aggregation. Effects of snake L-amino oxidases on platelets are controversial, since they either induce aggregation or inhibit agonist-induced aggregation. These different effects are probably due to different experimental conditions. Unlike other snake venom L-amino acid oxidases, does not induce hemorrhage. This protein may also have antibacterial and antiparasitic activities. The protein is L-amino-acid oxidase of Eristicophis macmahoni (Leaf-nosed viper).